Reading from the N-terminus, the 805-residue chain is Probable inorganic carbon transporter subunit DabA (805 aa).

Zn(2+) contacts are provided by C334, D336, H491, and C506.

This sequence belongs to the inorganic carbon transporter (TC 9.A.2) DabA family. Forms a complex with DabB. Zn(2+) serves as cofactor.

Its subcellular location is the cell inner membrane. Functionally, part of an energy-coupled inorganic carbon pump. The protein is Probable inorganic carbon transporter subunit DabA of Ruegeria sp. (strain TM1040) (Silicibacter sp.).